The chain runs to 523 residues: Sensory neuron membrane protein 1 (523 aa).

The Cytoplasmic portion of the chain corresponds to 1 to 11; the sequence is MQLPRELKYAA. The chain crosses the membrane as a helical span at residues 12-32; the sequence is IAGGVALFGLIFGWVLFPTIL. At 33-458 the chain is on the extracellular side; it reads KSQLKKEMAL…HQLFIPKRVV (426 aa). N-linked (GlcNAc...) asparagine glycans are attached at residues N67 and N229. Cystine bridges form between C268–C333, C297–C352, and C335–C341. N440 is a glycosylation site (N-linked (GlcNAc...) asparagine). The chain crosses the membrane as a helical span at residues 459–479; that stretch reads GVLRWWMVSFGSLGAVIGIVF. Residues 480–523 are Cytoplasmic-facing; it reads HFRDHIMRLAVSGDTKVSKVTPEEEEQKDISVIGQAQEPAKVNI.

The protein belongs to the CD36 family.

It localises to the cell membrane. Plays an olfactory role that is not restricted to pheromone sensitivity. In Helicoverpa armigera (Cotton bollworm), this protein is Sensory neuron membrane protein 1.